Consider the following 937-residue polypeptide: MRVKDTLNLGKTKFKMRGNLPVKEVDRQKAWAENKMYEARQKLNEGKPTFILHDGPPYANGPIHMGHALNKISKDIIVRYKSMSGFRAPYVPGWDTHGLPIEQQLTKAGYDRKKMSTAEFRDLCREYALKQVDQQREGFKRLGVSAEWDNPYLTLKPEFEAAEVRVFGEMAKRGLIYKGKKPVYWSWSSESAMAEAEVEYHDVTSPSAFYGEQVVDGKGVLDTDTYLVVWTTTPWTIPGSEGITIDAGIEYAVVKPANDDRKFVLAADLVDQNAEMFGWEDVQVIKTVMGQDLDNVTAQHPFIADRKLVVMLGDFVTTESGTGLVHTAPGLGEDDFNVGALYHLPVLVPVDDKGYMTAEAGADFAGVFYEDANQIALDKLKAANALLKYMPYEHSYPFDWRTKKPVIFRATPQWFASVDKIRDEILAQLKDVKFQPDWGQRRLANMIKDRGDWVISRQRVWGVPLPIFYGEDGEAIITPETVDHVADLFAEYGSNIWFKREAKDLLPDGFTSEHSPNGEFTKETDIMDVWFDSGTSHQGVLAERDYLDFPADLYLEGSDQYRGWFNSSLITSVAATGKAPYKQVVSQGFTLDKDGHKMSKSLGNTIAPDEIISKMGADIVRLWVTSVDSSADVRVSTEAFVKISDSYKKLRNTMRYLLANTSDFDPQTDAIAVDDLQPVDRHMLYQLNEFAKSVRAHYDHYDFLNIYKELINFVVSDLSAFYLDFAKDILYIEAADSPVRRSMQTVFYQIAVSLTKLITPILPHTAEEIWDFLKEPEDFVQLAEMPAVLELTDANEQPDDGHQSAWDHFMTLRSHVLKALEEARDAKLIGKAAEAHLDLYVDEETKRLLDQLNVNVQQILLVSGLDVASLDQAPADALTFDHLAVKVTPAAGEVCDRCRLTKEDVGSDSAYPHFCARCAAIVRQNFPETATEGFDEN.

The short motif at 57-67 (PYANGPIHMGH) is the 'HIGH' region element. Glu556 is an L-isoleucyl-5'-AMP binding site. A 'KMSKS' region motif is present at residues 597–601 (KMSKS). Lys600 is an ATP binding site. Zn(2+)-binding residues include Cys895, Cys898, Cys915, and Cys918.

It belongs to the class-I aminoacyl-tRNA synthetase family. IleS type 1 subfamily. As to quaternary structure, monomer. The cofactor is Zn(2+).

It localises to the cytoplasm. It carries out the reaction tRNA(Ile) + L-isoleucine + ATP = L-isoleucyl-tRNA(Ile) + AMP + diphosphate. In terms of biological role, catalyzes the attachment of isoleucine to tRNA(Ile). As IleRS can inadvertently accommodate and process structurally similar amino acids such as valine, to avoid such errors it has two additional distinct tRNA(Ile)-dependent editing activities. One activity is designated as 'pretransfer' editing and involves the hydrolysis of activated Val-AMP. The other activity is designated 'posttransfer' editing and involves deacylation of mischarged Val-tRNA(Ile). The protein is Isoleucine--tRNA ligase of Levilactobacillus brevis (strain ATCC 367 / BCRC 12310 / CIP 105137 / JCM 1170 / LMG 11437 / NCIMB 947 / NCTC 947) (Lactobacillus brevis).